The chain runs to 536 residues: Chaperonin GroEL (536 aa).

ATP-binding positions include Thr-30–Pro-33, Asp-86–Thr-90, Gly-414, and Asp-494.

It belongs to the chaperonin (HSP60) family. Forms a cylinder of 14 subunits composed of two heptameric rings stacked back-to-back. Interacts with the co-chaperonin GroES.

The protein resides in the cytoplasm. The enzyme catalyses ATP + H2O + a folded polypeptide = ADP + phosphate + an unfolded polypeptide.. In terms of biological role, together with its co-chaperonin GroES, plays an essential role in assisting protein folding. The GroEL-GroES system forms a nano-cage that allows encapsulation of the non-native substrate proteins and provides a physical environment optimized to promote and accelerate protein folding. In Methanospirillum hungatei JF-1 (strain ATCC 27890 / DSM 864 / NBRC 100397 / JF-1), this protein is Chaperonin GroEL.